Here is an 872-residue protein sequence, read N- to C-terminus: Leucine--tRNA ligase (872 aa).

Residues 56 to 66 (PYPSGNLHMGH) carry the 'HIGH' region motif. Residues 629–633 (KMSKS) carry the 'KMSKS' region motif. Position 632 (lysine 632) interacts with ATP.

This sequence belongs to the class-I aminoacyl-tRNA synthetase family.

It is found in the cytoplasm. It catalyses the reaction tRNA(Leu) + L-leucine + ATP = L-leucyl-tRNA(Leu) + AMP + diphosphate. The protein is Leucine--tRNA ligase of Prochlorococcus marinus (strain MIT 9211).